Reading from the N-terminus, the 339-residue chain is Phosphate acyltransferase (339 aa).

Belongs to the PlsX family. Homodimer. Probably interacts with PlsY.

The protein localises to the cytoplasm. The catalysed reaction is a fatty acyl-[ACP] + phosphate = an acyl phosphate + holo-[ACP]. It participates in lipid metabolism; phospholipid metabolism. In terms of biological role, catalyzes the reversible formation of acyl-phosphate (acyl-PO(4)) from acyl-[acyl-carrier-protein] (acyl-ACP). This enzyme utilizes acyl-ACP as fatty acyl donor, but not acyl-CoA. The protein is Phosphate acyltransferase of Brachyspira hyodysenteriae (strain ATCC 49526 / WA1).